A 212-amino-acid chain; its full sequence is tRNA (guanine-N(7)-)-methyltransferase (212 aa).

Residues Glu44, Asp69, Asp96, and Asp118 each coordinate S-adenosyl-L-methionine. Asp118 is an active-site residue. Substrate is bound at residue Lys122. The interval 124 to 129 is interaction with RNA; sequence RHEKRR. Substrate is bound by residues Asp154 and 191–194; that span reads TEYE.

Belongs to the class I-like SAM-binding methyltransferase superfamily. TrmB family.

It carries out the reaction guanosine(46) in tRNA + S-adenosyl-L-methionine = N(7)-methylguanosine(46) in tRNA + S-adenosyl-L-homocysteine. The protein operates within tRNA modification; N(7)-methylguanine-tRNA biosynthesis. In terms of biological role, catalyzes the formation of N(7)-methylguanine at position 46 (m7G46) in tRNA. In Streptococcus suis (strain 05ZYH33), this protein is tRNA (guanine-N(7)-)-methyltransferase.